The chain runs to 369 residues: Endo-1,4-beta-xylanase A (369 aa).

An N-terminal signal peptide occupies residues 1–20; sequence MRKLTQFCLGLMLLPIAAVA. The 347-residue stretch at 21 to 367 folds into the GH10 domain; that stretch reads QNQPTMKDVL…KPVVKEIIKL (347 aa). The active-site Proton donor is glutamate 156. Residue glutamate 261 is the Nucleophile of the active site.

It belongs to the glycosyl hydrolase 10 (cellulase F) family.

The catalysed reaction is Endohydrolysis of (1-&gt;4)-beta-D-xylosidic linkages in xylans.. It participates in glycan degradation; xylan degradation. The sequence is that of Endo-1,4-beta-xylanase A (xynA) from Xylanibacter ruminicola (Prevotella ruminicola).